The sequence spans 255 residues: Probable histidinol-phosphatase (255 aa).

It belongs to the PHP hydrolase family. HisK subfamily.

The enzyme catalyses L-histidinol phosphate + H2O = L-histidinol + phosphate. The protein operates within amino-acid biosynthesis; L-histidine biosynthesis; L-histidine from 5-phospho-alpha-D-ribose 1-diphosphate: step 8/9. In Clostridium acetobutylicum (strain ATCC 824 / DSM 792 / JCM 1419 / IAM 19013 / LMG 5710 / NBRC 13948 / NRRL B-527 / VKM B-1787 / 2291 / W), this protein is Probable histidinol-phosphatase (hisK).